The chain runs to 316 residues: Mannose-6-phosphate isomerase (316 aa).

Zn(2+) contacts are provided by glutamine 95, histidine 97, glutamate 114, and histidine 171. Residue arginine 191 is part of the active site.

Belongs to the mannose-6-phosphate isomerase type 1 family. The cofactor is Zn(2+).

The catalysed reaction is D-mannose 6-phosphate = D-fructose 6-phosphate. The polypeptide is Mannose-6-phosphate isomerase (pmi) (Streptococcus mutans serotype c (strain ATCC 700610 / UA159)).